The primary structure comprises 112 residues: Ribosomal processing cysteine protease Prp (112 aa).

Histidine 22 (proton donor) is an active-site residue. Residue cysteine 34 is the Nucleophile of the active site.

This sequence belongs to the Prp family. As to quaternary structure, homodimer.

Its function is as follows. An essential cysteine protease that cleaves the N-terminus from ribosomal protein bL27. The polypeptide is Ribosomal processing cysteine protease Prp (Bacillus subtilis (strain 168)).